Here is a 37-residue protein sequence, read N- to C-terminus: uncharacterized protein (37 aa).

This is an uncharacterized protein from Saccharomyces cerevisiae (strain ATCC 204508 / S288c) (Baker's yeast).